Consider the following 258-residue polypeptide: Tryptophan synthase alpha chain (258 aa).

Residues E52 and D63 each act as proton acceptor in the active site.

Belongs to the TrpA family. As to quaternary structure, tetramer of two alpha and two beta chains.

The enzyme catalyses (1S,2R)-1-C-(indol-3-yl)glycerol 3-phosphate + L-serine = D-glyceraldehyde 3-phosphate + L-tryptophan + H2O. Its pathway is amino-acid biosynthesis; L-tryptophan biosynthesis; L-tryptophan from chorismate: step 5/5. Functionally, the alpha subunit is responsible for the aldol cleavage of indoleglycerol phosphate to indole and glyceraldehyde 3-phosphate. This chain is Tryptophan synthase alpha chain, found in Streptococcus pneumoniae serotype 2 (strain D39 / NCTC 7466).